Here is a 39-residue protein sequence, read N- to C-terminus: Photosystem II reaction center protein L (39 aa).

The helical transmembrane segment at 18-38 threads the bilayer; the sequence is SLYLGLLFVFVTGVLMSSYFF.

It belongs to the PsbL family. In terms of assembly, PSII is composed of 1 copy each of membrane proteins PsbA, PsbB, PsbC, PsbD, PsbE, PsbF, PsbH, PsbI, PsbJ, PsbK, PsbL, PsbM, PsbT, PsbX, PsbY, PsbZ, Psb30/Ycf12, peripheral proteins PsbO, CyanoQ (PsbQ), PsbU, PsbV and a large number of cofactors. It forms dimeric complexes.

The protein localises to the cellular thylakoid membrane. Its function is as follows. One of the components of the core complex of photosystem II (PSII). PSII is a light-driven water:plastoquinone oxidoreductase that uses light energy to abstract electrons from H(2)O, generating O(2) and a proton gradient subsequently used for ATP formation. It consists of a core antenna complex that captures photons, and an electron transfer chain that converts photonic excitation into a charge separation. This subunit is found at the monomer-monomer interface and is required for correct PSII assembly and/or dimerization. This is Photosystem II reaction center protein L from Synechococcus sp. (strain CC9902).